Reading from the N-terminus, the 622-residue chain is 1-deoxy-D-xylulose-5-phosphate synthase (622 aa).

Thiamine diphosphate-binding positions include histidine 80 and 121–123; that span reads GHS. Aspartate 152 is a Mg(2+) binding site. Residues 153 to 154, asparagine 181, tyrosine 288, and glutamate 370 contribute to the thiamine diphosphate site; that span reads GA. Asparagine 181 lines the Mg(2+) pocket.

It belongs to the transketolase family. DXPS subfamily. Homodimer. Mg(2+) serves as cofactor. The cofactor is thiamine diphosphate.

It carries out the reaction D-glyceraldehyde 3-phosphate + pyruvate + H(+) = 1-deoxy-D-xylulose 5-phosphate + CO2. It participates in metabolic intermediate biosynthesis; 1-deoxy-D-xylulose 5-phosphate biosynthesis; 1-deoxy-D-xylulose 5-phosphate from D-glyceraldehyde 3-phosphate and pyruvate: step 1/1. In terms of biological role, catalyzes the acyloin condensation reaction between C atoms 2 and 3 of pyruvate and glyceraldehyde 3-phosphate to yield 1-deoxy-D-xylulose-5-phosphate (DXP). The sequence is that of 1-deoxy-D-xylulose-5-phosphate synthase from Shewanella amazonensis (strain ATCC BAA-1098 / SB2B).